A 313-amino-acid chain; its full sequence is tRNA dimethylallyltransferase (313 aa).

17–24 (GPTASGKT) serves as a coordination point for ATP. 19–24 (TASGKT) contacts substrate. Interaction with substrate tRNA regions lie at residues 42–45 (DSAL), 166–170 (QRLSR), 247–252 (RCVGYR), and 280–287 (KRQITWLR).

It belongs to the IPP transferase family. Monomer. It depends on Mg(2+) as a cofactor.

It catalyses the reaction adenosine(37) in tRNA + dimethylallyl diphosphate = N(6)-dimethylallyladenosine(37) in tRNA + diphosphate. Catalyzes the transfer of a dimethylallyl group onto the adenine at position 37 in tRNAs that read codons beginning with uridine, leading to the formation of N6-(dimethylallyl)adenosine (i(6)A). The protein is tRNA dimethylallyltransferase of Proteus mirabilis (strain HI4320).